We begin with the raw amino-acid sequence, 496 residues long: MALWRGSACAGFLALAVGCVFLLEPELPGTALRSLWSSLRLGPAPVPVGPLSPESRLAAAWDALIAQPARRWRRVAVGVNACVDVVISGVKLLQALGLSPGSGKDHAILHSRSDLEEAFLYFMGKGAAAERFFSDKETFHDIAQAASEFPGAQHYVGGNAALIGQRFAANTDLKVLLCGPIGPKLHELLDDNVFVPPESLQEEDEFHLILEYLAGEEWGPFKAPHANRFIFSHDLSNGAMNMLEVFVSSLEEFQPDLVVLSGLHMMEGQSKELQRKRLLEVVTAISDIPTGIPVHLELASMTNRELMSSIVHQQVFPAVASLGLNEQELLFLSQSASGPHSSLSSWDGVPDVGMVSDILFWILKEHGRSENRASDLTRIHFHTLVYHILATVDGHWANQLAAVAAGARVAGTQACATETIDTNRVSLRAPQEFTTSHLESGSRIVLNPDKPVVEWHREGITFHFTPVLVCKDPVRTVGLGDAISAEGLFYSEARPD.

The first 22 residues, 1-22 (MALWRGSACAGFLALAVGCVFL), serve as a signal peptide directing secretion. The ADPK domain occupies 52–496 (SPESRLAAAW…GLFYSEARPD (445 aa)). Residues glutamate 297, glutamate 328, and aspartate 481 each contribute to the Mg(2+) site. The active-site Proton acceptor is aspartate 481.

This sequence belongs to the ADP-dependent glucokinase family. As to quaternary structure, monomer. Mg(2+) serves as cofactor.

Its subcellular location is the secreted. It catalyses the reaction D-glucose + ADP = D-glucose 6-phosphate + AMP + H(+). It functions in the pathway carbohydrate degradation; glycolysis. Functionally, catalyzes the phosphorylation of D-glucose to D-glucose 6-phosphate using ADP as the phosphate donor. GDP and CDP can replace ADP, but with reduced efficiency. The protein is ADP-dependent glucokinase (Adpgk) of Mus musculus (Mouse).